A 178-amino-acid chain; its full sequence is Caveolin-1 (178 aa).

At S2 the chain carries N-acetylserine. Residue S2 is modified to Phosphoserine. The segment at 2 to 94 (SGGKYVDSEG…WKASFTTFTV (93 aa)) is required for homooligomerization. At 2 to 104 (SGGKYVDSEG…TKYWFYRLLS (103 aa)) the chain is on the cytoplasmic side. At K5 the chain carries N6-acetyllysine; alternate. A Glycyl lysine isopeptide (Lys-Gly) (interchain with G-Cter in ubiquitin); alternate cross-link involves residue K5. Position 6 is a phosphotyrosine (Y6). S9 is subject to Phosphoserine. Residue Y14 is modified to Phosphotyrosine; by ABL1. Y25 carries the phosphotyrosine modification. Glycyl lysine isopeptide (Lys-Gly) (interchain with G-Cter in ubiquitin) cross-links involve residues K26, K30, K39, K47, and K57. Positions 82-94 (DGIWKASFTTFTV) are interaction with CAVIN3. An intramembrane region (helical) is located at residues 105–125 (ALFGIPMALIWGIYFAILSFL). The Cytoplasmic segment spans residues 126–178 (HIWAVVPCIKSFLIEIQCISRVYSIYVHTFCDPFFEAVGKIFSNIRINMQKEI). The tract at residues 131-142 (VPCIKSFLIEIQ) is interacts with SPRY1, SPRY2, SPRY3 and SPRY4. S-palmitoyl cysteine attachment occurs at residues C133, C143, and C156. The segment at 149–160 (SIYVHTFCDPFF) is interacts with SPRY1, SPRY2, and SPRY4. The segment at 167 to 178 (FSNIRINMQKEI) is interacts with SPRY1, SPRY2, SPRY3 and SPRY4.

It belongs to the caveolin family. In terms of assembly, homooligomer. Interacts with GLIPR2. Interacts with NOSTRIN. Interacts with SNAP25 and STX1A. Interacts (via the N-terminus) with DPP4; the interaction is direct. Interacts with CTNNB1, CDH1 and JUP. Interacts with PACSIN2; this interaction induces membrane tubulation. Interacts with SLC7A9. Interacts with BMX and BTK. Interacts with TGFBR1. Interacts with CAVIN3 (via leucine-zipper domain) in a cholesterol-sensitive manner. Interacts with CAVIN1. Interacts with EHD2 in a cholesterol-dependent manner. Forms a ternary complex with UBXN6 and VCP; mediates CAV1 targeting to lysosomes for degradation. Interacts with ABCG1; this interaction regulates ABCG1-mediated cholesterol efflux. Interacts with NEU3; this interaction enhances NEU3 sialidase activity within caveola. Interacts (via C-terminus) with SPRY1, SPRY2 (via C-terminus), SPRY3, and SPRY4. Interacts with IGFBP5; this interaction allows trafficking of IGFBP5 from the plasma membrane to the nucleus. Post-translationally, phosphorylated at Tyr-14 by ABL1 in response to oxidative stress. In terms of processing, ubiquitinated. Undergo monoubiquitination and multi- and/or polyubiquitination. Monoubiquitination of N-terminal lysines promotes integration in a ternary complex with UBXN6 and VCP which promotes oligomeric CAV1 targeting to lysosomes for degradation. Ubiquitinated by ZNRF1; leading to degradation and modulation of the TLR4-mediated immune response.

The protein resides in the golgi apparatus membrane. It localises to the cell membrane. The protein localises to the membrane. It is found in the caveola. Its subcellular location is the membrane raft. In terms of biological role, may act as a scaffolding protein within caveolar membranes. Forms a stable heterooligomeric complex with CAV2 that targets to lipid rafts and drives caveolae formation. Mediates the recruitment of CAVIN proteins (CAVIN1/2/3/4) to the caveolae. Interacts directly with G-protein alpha subunits and can functionally regulate their activity. Involved in the costimulatory signal essential for T-cell receptor (TCR)-mediated T-cell activation. Its binding to DPP4 induces T-cell proliferation and NF-kappa-B activation in a T-cell receptor/CD3-dependent manner. Recruits CTNNB1 to caveolar membranes and may regulate CTNNB1-mediated signaling through the Wnt pathway. Negatively regulates TGFB1-mediated activation of SMAD2/3 by mediating the internalization of TGFBR1 from membrane rafts leading to its subsequent degradation. Binds 20(S)-hydroxycholesterol (20(S)-OHC). In Felis catus (Cat), this protein is Caveolin-1 (CAV1).